Here is a 161-residue protein sequence, read N- to C-terminus: Probable ubiquitin-conjugating enzyme E2 16 (161 aa).

A UBC core domain is found at 15 to 161 (IATNRLQKEL…TRWWFHDDKV (147 aa)). Catalysis depends on Cys-99, which acts as the Glycyl thioester intermediate.

The protein belongs to the ubiquitin-conjugating enzyme family.

It carries out the reaction S-ubiquitinyl-[E1 ubiquitin-activating enzyme]-L-cysteine + [E2 ubiquitin-conjugating enzyme]-L-cysteine = [E1 ubiquitin-activating enzyme]-L-cysteine + S-ubiquitinyl-[E2 ubiquitin-conjugating enzyme]-L-cysteine.. The protein operates within protein modification; protein ubiquitination. Accepts the ubiquitin from the E1 complex and catalyzes its covalent attachment to other proteins. The sequence is that of Probable ubiquitin-conjugating enzyme E2 16 (UBC16) from Arabidopsis thaliana (Mouse-ear cress).